The chain runs to 126 residues: Aspartate 1-decarboxylase (126 aa).

The active-site Schiff-base intermediate with substrate; via pyruvic acid is Ser25. Position 25 is a pyruvic acid (Ser) (Ser25). Thr57 lines the substrate pocket. Tyr58 serves as the catalytic Proton donor. Residue 73 to 75 (GGA) coordinates substrate.

It belongs to the PanD family. As to quaternary structure, heterooctamer of four alpha and four beta subunits. Pyruvate is required as a cofactor. Is synthesized initially as an inactive proenzyme, which is activated by self-cleavage at a specific serine bond to produce a beta-subunit with a hydroxyl group at its C-terminus and an alpha-subunit with a pyruvoyl group at its N-terminus.

It localises to the cytoplasm. The catalysed reaction is L-aspartate + H(+) = beta-alanine + CO2. The protein operates within cofactor biosynthesis; (R)-pantothenate biosynthesis; beta-alanine from L-aspartate: step 1/1. In terms of biological role, catalyzes the pyruvoyl-dependent decarboxylation of aspartate to produce beta-alanine. In Xylella fastidiosa (strain Temecula1 / ATCC 700964), this protein is Aspartate 1-decarboxylase.